The following is a 95-amino-acid chain: Co-chaperonin GroES (95 aa).

Belongs to the GroES chaperonin family. In terms of assembly, heptamer of 7 subunits arranged in a ring. Interacts with the chaperonin GroEL.

It localises to the cytoplasm. Together with the chaperonin GroEL, plays an essential role in assisting protein folding. The GroEL-GroES system forms a nano-cage that allows encapsulation of the non-native substrate proteins and provides a physical environment optimized to promote and accelerate protein folding. GroES binds to the apical surface of the GroEL ring, thereby capping the opening of the GroEL channel. The polypeptide is Co-chaperonin GroES (Chlorobium luteolum (strain DSM 273 / BCRC 81028 / 2530) (Pelodictyon luteolum)).